A 456-amino-acid polypeptide reads, in one-letter code: Trigger factor (456 aa).

One can recognise a PPIase FKBP-type domain in the interval 166 to 245 (GDYANIDLNA…VNSVKAEELP (80 aa)).

The protein belongs to the FKBP-type PPIase family. Tig subfamily.

It is found in the cytoplasm. The catalysed reaction is [protein]-peptidylproline (omega=180) = [protein]-peptidylproline (omega=0). In terms of biological role, involved in protein export. Acts as a chaperone by maintaining the newly synthesized protein in an open conformation. Functions as a peptidyl-prolyl cis-trans isomerase. The sequence is that of Trigger factor from Bifidobacterium adolescentis (strain ATCC 15703 / DSM 20083 / NCTC 11814 / E194a).